A 1175-amino-acid chain; its full sequence is Beta-agarase AgaO (1175 aa).

The first 29 residues, M1–A29, serve as a signal peptide directing secretion. In terms of domain architecture, CBM6 1 spans Y32–A164. Residues S169 to S208 form a disordered region. Positions T178 to S200 are enriched in low complexity. One can recognise a CBM6 2 domain in the interval F211 to E339. Residues I355–A481 are disordered. Positions D382 to D393 are enriched in basic and acidic residues. Over residues N471–A481 the composition is skewed to polar residues. The active-site Proton donor is E661. Catalysis depends on E832, which acts as the Nucleophile.

It belongs to the glycosyl hydrolase 86 family.

It catalyses the reaction Hydrolysis of (1-&gt;4)-beta-D-galactosidic linkages in agarose, giving the tetramer as the predominant product.. With respect to regulation, activity and stability are strongly enhanced by CaCl(2). Activity is not affected by sulfhydryl inhibitors such as iodoacetoamide and p-chloromercuribenzoate or by thiol reagents such as dithiothreitol and 2-mercaptoethanol. Strongly inhibited by N-bromosuccinimide and sodium dodecyl sulfate. Its function is as follows. Endo-type beta-agarase, which degrades agarose and agarose oligosaccharides more polymerized than hexamers to yield neoagarohexaose (NA6) as the main product, with lesser amounts of neoagarotetraose (NA4) and neoagarobiose (NA2). This chain is Beta-agarase AgaO, found in Microbulbifer thermotolerans.